The chain runs to 97 residues: Aspartyl/glutamyl-tRNA(Asn/Gln) amidotransferase subunit C (97 aa).

This sequence belongs to the GatC family. As to quaternary structure, heterotrimer of A, B and C subunits.

It catalyses the reaction L-glutamyl-tRNA(Gln) + L-glutamine + ATP + H2O = L-glutaminyl-tRNA(Gln) + L-glutamate + ADP + phosphate + H(+). The enzyme catalyses L-aspartyl-tRNA(Asn) + L-glutamine + ATP + H2O = L-asparaginyl-tRNA(Asn) + L-glutamate + ADP + phosphate + 2 H(+). Its function is as follows. Allows the formation of correctly charged Asn-tRNA(Asn) or Gln-tRNA(Gln) through the transamidation of misacylated Asp-tRNA(Asn) or Glu-tRNA(Gln) in organisms which lack either or both of asparaginyl-tRNA or glutaminyl-tRNA synthetases. The reaction takes place in the presence of glutamine and ATP through an activated phospho-Asp-tRNA(Asn) or phospho-Glu-tRNA(Gln). The polypeptide is Aspartyl/glutamyl-tRNA(Asn/Gln) amidotransferase subunit C (Prochlorococcus marinus (strain MIT 9211)).